A 486-amino-acid polypeptide reads, in one-letter code: Malonate-semialdehyde dehydrogenase 1 (486 aa).

The NAD(+) site is built by Phe-154, Lys-178, Glu-181, Arg-182, and Ser-231. Cys-286 acts as the Nucleophile in catalysis. Position 386 (Glu-386) interacts with NAD(+).

This sequence belongs to the aldehyde dehydrogenase family. IolA subfamily. In terms of assembly, homotetramer.

It catalyses the reaction 3-oxopropanoate + NAD(+) + CoA + H2O = hydrogencarbonate + acetyl-CoA + NADH + H(+). The enzyme catalyses 2-methyl-3-oxopropanoate + NAD(+) + CoA + H2O = propanoyl-CoA + hydrogencarbonate + NADH + H(+). The protein operates within polyol metabolism; myo-inositol degradation into acetyl-CoA; acetyl-CoA from myo-inositol: step 7/7. Catalyzes the oxidation of malonate semialdehyde (MSA) and methylmalonate semialdehyde (MMSA) into acetyl-CoA and propanoyl-CoA, respectively. Is involved in a myo-inositol catabolic pathway. Bicarbonate, and not CO2, is the end-product of the enzymatic reaction. This chain is Malonate-semialdehyde dehydrogenase 1, found in Bacillus anthracis.